The primary structure comprises 418 residues: Glutamyl-tRNA(Gln) amidotransferase subunit D (418 aa).

Positions 74–405 (KNISILSTGG…EEAKELMPKN (332 aa)) constitute an Asparaginase/glutaminase domain. Active-site residues include Thr-84, Thr-160, Asp-161, and Lys-237.

The protein belongs to the asparaginase 1 family. GatD subfamily. In terms of assembly, heterodimer of GatD and GatE.

The enzyme catalyses L-glutamyl-tRNA(Gln) + L-glutamine + ATP + H2O = L-glutaminyl-tRNA(Gln) + L-glutamate + ADP + phosphate + H(+). Functionally, allows the formation of correctly charged Gln-tRNA(Gln) through the transamidation of misacylated Glu-tRNA(Gln) in organisms which lack glutaminyl-tRNA synthetase. The reaction takes place in the presence of glutamine and ATP through an activated gamma-phospho-Glu-tRNA(Gln). The GatDE system is specific for glutamate and does not act on aspartate. The chain is Glutamyl-tRNA(Gln) amidotransferase subunit D from Methanococcus maripaludis (strain C6 / ATCC BAA-1332).